We begin with the raw amino-acid sequence, 150 residues long: Endoribonuclease YbeY (150 aa).

His112, His116, and His122 together coordinate Zn(2+).

The protein belongs to the endoribonuclease YbeY family. It depends on Zn(2+) as a cofactor.

It is found in the cytoplasm. Functionally, single strand-specific metallo-endoribonuclease involved in late-stage 70S ribosome quality control and in maturation of the 3' terminus of the 16S rRNA. The sequence is that of Endoribonuclease YbeY from Geobacter sulfurreducens (strain ATCC 51573 / DSM 12127 / PCA).